A 509-amino-acid polypeptide reads, in one-letter code: Bifunctional purine biosynthesis protein PurH (509 aa).

The 144-residue stretch at 1–144 (MKRALISVSD…KNYAAVTVVV (144 aa)) folds into the MGS-like domain.

The protein belongs to the PurH family.

It catalyses the reaction (6R)-10-formyltetrahydrofolate + 5-amino-1-(5-phospho-beta-D-ribosyl)imidazole-4-carboxamide = 5-formamido-1-(5-phospho-D-ribosyl)imidazole-4-carboxamide + (6S)-5,6,7,8-tetrahydrofolate. It carries out the reaction IMP + H2O = 5-formamido-1-(5-phospho-D-ribosyl)imidazole-4-carboxamide. It functions in the pathway purine metabolism; IMP biosynthesis via de novo pathway; 5-formamido-1-(5-phospho-D-ribosyl)imidazole-4-carboxamide from 5-amino-1-(5-phospho-D-ribosyl)imidazole-4-carboxamide (10-formyl THF route): step 1/1. Its pathway is purine metabolism; IMP biosynthesis via de novo pathway; IMP from 5-formamido-1-(5-phospho-D-ribosyl)imidazole-4-carboxamide: step 1/1. The sequence is that of Bifunctional purine biosynthesis protein PurH from Listeria innocua serovar 6a (strain ATCC BAA-680 / CLIP 11262).